A 249-amino-acid polypeptide reads, in one-letter code: Transcription factor MYB90 (249 aa).

HTH myb-type domains lie at 5–57 (SKGL…LNYL) and 58–112 (KPSI…SKKH). 2 DNA-binding regions (H-T-H motif) span residues 33 to 57 (WHQVPLRAGLNRCRKSCRLRWLNYL) and 85 to 108 (WSLIAGRLPGRTANDVKNYWNTHL).

Interacts with BHLH12/MYC1, BHLH1/GL3/MYC6, BHLH2/EGL3/MYC146, and BHLH42/TT8. In terms of tissue distribution, expressed only in leaves and siliques.

The protein resides in the nucleus. Transcription activator, when associated with BHLH12/MYC1, EGL3, or GL3. Promotes the synthesis of phenylpropanoid-derived compounds such as anthocyanins. This Arabidopsis thaliana (Mouse-ear cress) protein is Transcription factor MYB90 (MYB90).